The chain runs to 412 residues: 1-deoxy-D-xylulose 5-phosphate reductoisomerase (412 aa).

NADPH contacts are provided by threonine 10, glycine 11, serine 12, isoleucine 13, glycine 36, lysine 37, asparagine 38, and asparagine 130. Lysine 131 is a binding site for 1-deoxy-D-xylulose 5-phosphate. NADPH is bound at residue glutamate 132. Aspartate 156 contributes to the Mn(2+) binding site. 1-deoxy-D-xylulose 5-phosphate is bound by residues serine 157, glutamate 158, serine 194, and histidine 217. Glutamate 158 is a binding site for Mn(2+). Glycine 223 is an NADPH binding site. 1-deoxy-D-xylulose 5-phosphate is bound by residues serine 230, asparagine 235, lysine 236, and glutamate 239. Glutamate 239 is a Mn(2+) binding site.

Belongs to the DXR family. Mg(2+) is required as a cofactor. Mn(2+) serves as cofactor.

It carries out the reaction 2-C-methyl-D-erythritol 4-phosphate + NADP(+) = 1-deoxy-D-xylulose 5-phosphate + NADPH + H(+). The protein operates within isoprenoid biosynthesis; isopentenyl diphosphate biosynthesis via DXP pathway; isopentenyl diphosphate from 1-deoxy-D-xylulose 5-phosphate: step 1/6. Catalyzes the NADPH-dependent rearrangement and reduction of 1-deoxy-D-xylulose-5-phosphate (DXP) to 2-C-methyl-D-erythritol 4-phosphate (MEP). In Prochlorococcus marinus (strain NATL2A), this protein is 1-deoxy-D-xylulose 5-phosphate reductoisomerase.